A 507-amino-acid chain; its full sequence is Type II methyltransferase M.PstI (507 aa).

Belongs to the N(4)/N(6)-methyltransferase family. As to quaternary structure, monomer.

It catalyses the reaction a 2'-deoxyadenosine in DNA + S-adenosyl-L-methionine = an N(6)-methyl-2'-deoxyadenosine in DNA + S-adenosyl-L-homocysteine + H(+). Its function is as follows. A gamma subtype methylase that recognizes the double-stranded sequence 5'-CTGCAG-3', methylates A-5 on both strands, and protects the DNA from cleavage by the PstI endonuclease. The protein is Type II methyltransferase M.PstI (pstIM) of Providencia stuartii.